The primary structure comprises 343 residues: N-acetyl-gamma-glutamyl-phosphate reductase (343 aa).

Residue Cys-149 is part of the active site.

The protein belongs to the NAGSA dehydrogenase family. Type 1 subfamily.

It is found in the cytoplasm. It carries out the reaction N-acetyl-L-glutamate 5-semialdehyde + phosphate + NADP(+) = N-acetyl-L-glutamyl 5-phosphate + NADPH + H(+). The protein operates within amino-acid biosynthesis; L-arginine biosynthesis; N(2)-acetyl-L-ornithine from L-glutamate: step 3/4. Its function is as follows. Catalyzes the NADPH-dependent reduction of N-acetyl-5-glutamyl phosphate to yield N-acetyl-L-glutamate 5-semialdehyde. This Methanococcus maripaludis (strain C5 / ATCC BAA-1333) protein is N-acetyl-gamma-glutamyl-phosphate reductase.